A 452-amino-acid polypeptide reads, in one-letter code: Probable phosphoglucosamine mutase (452 aa).

Residue S96 is the Phosphoserine intermediate of the active site. Mg(2+) is bound by residues S96, D235, D237, and D239. At S96 the chain carries Phosphoserine.

It belongs to the phosphohexose mutase family. The cofactor is Mg(2+). Post-translationally, activated by phosphorylation.

The catalysed reaction is alpha-D-glucosamine 1-phosphate = D-glucosamine 6-phosphate. Catalyzes the conversion of glucosamine-6-phosphate to glucosamine-1-phosphate. The chain is Probable phosphoglucosamine mutase from Methanopyrus kandleri (strain AV19 / DSM 6324 / JCM 9639 / NBRC 100938).